We begin with the raw amino-acid sequence, 271 residues long: Phosphoribosylformylglycinamidine synthase subunit PurQ (271 aa).

A Glutamine amidotransferase type-1 domain is found at 7 to 253; sequence KVAVLRMEGT…FGYQVGRREG (247 aa). The active-site Nucleophile is the Cys-104. Residues His-238 and Glu-240 contribute to the active site.

Part of the FGAM synthase complex composed of 1 PurL, 1 PurQ and 2 PurS subunits.

It localises to the cytoplasm. The catalysed reaction is N(2)-formyl-N(1)-(5-phospho-beta-D-ribosyl)glycinamide + L-glutamine + ATP + H2O = 2-formamido-N(1)-(5-O-phospho-beta-D-ribosyl)acetamidine + L-glutamate + ADP + phosphate + H(+). It catalyses the reaction L-glutamine + H2O = L-glutamate + NH4(+). The protein operates within purine metabolism; IMP biosynthesis via de novo pathway; 5-amino-1-(5-phospho-D-ribosyl)imidazole from N(2)-formyl-N(1)-(5-phospho-D-ribosyl)glycinamide: step 1/2. Its function is as follows. Part of the phosphoribosylformylglycinamidine synthase complex involved in the purines biosynthetic pathway. Catalyzes the ATP-dependent conversion of formylglycinamide ribonucleotide (FGAR) and glutamine to yield formylglycinamidine ribonucleotide (FGAM) and glutamate. The FGAM synthase complex is composed of three subunits. PurQ produces an ammonia molecule by converting glutamine to glutamate. PurL transfers the ammonia molecule to FGAR to form FGAM in an ATP-dependent manner. PurS interacts with PurQ and PurL and is thought to assist in the transfer of the ammonia molecule from PurQ to PurL. The polypeptide is Phosphoribosylformylglycinamidine synthase subunit PurQ (Archaeoglobus fulgidus (strain ATCC 49558 / DSM 4304 / JCM 9628 / NBRC 100126 / VC-16)).